The following is an 82-amino-acid chain: uncharacterized protein (82 aa).

This is an uncharacterized protein from Human herpesvirus 6A (strain Uganda-1102) (HHV-6 variant A).